Reading from the N-terminus, the 346-residue chain is Protein RecA (346 aa).

An ATP-binding site is contributed by 65–72; that stretch reads GPESSGKT.

It belongs to the RecA family.

It localises to the cytoplasm. Functionally, can catalyze the hydrolysis of ATP in the presence of single-stranded DNA, the ATP-dependent uptake of single-stranded DNA by duplex DNA, and the ATP-dependent hybridization of homologous single-stranded DNAs. It interacts with LexA causing its activation and leading to its autocatalytic cleavage. The protein is Protein RecA of Enterococcus mundtii.